The primary structure comprises 556 residues: Dihydroxy-acid dehydratase (556 aa).

[2Fe-2S] cluster is bound at residue Cys-47. Asp-79 lines the Mg(2+) pocket. [2Fe-2S] cluster is bound at residue Cys-120. 2 residues coordinate Mg(2+): Asp-121 and Lys-122. Lys-122 carries the post-translational modification N6-carboxylysine. Cys-192 serves as a coordination point for [2Fe-2S] cluster. Glu-444 contacts Mg(2+). The active-site Proton acceptor is the Ser-470.

The protein belongs to the IlvD/Edd family. As to quaternary structure, homodimer. [2Fe-2S] cluster is required as a cofactor. It depends on Mg(2+) as a cofactor.

The catalysed reaction is (2R)-2,3-dihydroxy-3-methylbutanoate = 3-methyl-2-oxobutanoate + H2O. It carries out the reaction (2R,3R)-2,3-dihydroxy-3-methylpentanoate = (S)-3-methyl-2-oxopentanoate + H2O. It functions in the pathway amino-acid biosynthesis; L-isoleucine biosynthesis; L-isoleucine from 2-oxobutanoate: step 3/4. The protein operates within amino-acid biosynthesis; L-valine biosynthesis; L-valine from pyruvate: step 3/4. Its function is as follows. Functions in the biosynthesis of branched-chain amino acids. Catalyzes the dehydration of (2R,3R)-2,3-dihydroxy-3-methylpentanoate (2,3-dihydroxy-3-methylvalerate) into 2-oxo-3-methylpentanoate (2-oxo-3-methylvalerate) and of (2R)-2,3-dihydroxy-3-methylbutanoate (2,3-dihydroxyisovalerate) into 2-oxo-3-methylbutanoate (2-oxoisovalerate), the penultimate precursor to L-isoleucine and L-valine, respectively. The chain is Dihydroxy-acid dehydratase from Prochlorococcus marinus (strain NATL2A).